A 362-amino-acid chain; its full sequence is Peptide chain release factor 1 (362 aa).

The residue at position 237 (Q237) is an N5-methylglutamine.

It belongs to the prokaryotic/mitochondrial release factor family. In terms of processing, methylated by PrmC. Methylation increases the termination efficiency of RF1.

The protein localises to the cytoplasm. Peptide chain release factor 1 directs the termination of translation in response to the peptide chain termination codons UAG and UAA. The protein is Peptide chain release factor 1 of Vibrio atlanticus (strain LGP32) (Vibrio splendidus (strain Mel32)).